A 215-amino-acid chain; its full sequence is Thiamine import ATP-binding protein ThiQ (215 aa).

In terms of domain architecture, ABC transporter spans 2-215 (IYLNNVILND…GQISQLQKGV (214 aa)). An ATP-binding site is contributed by 32 to 39 (GESGAGKS).

Belongs to the ABC transporter superfamily. Thiamine importer (TC 3.A.1.19.1) family. In terms of assembly, the complex is composed of two ATP-binding proteins (ThiQ), two transmembrane proteins (ThiP) and a solute-binding protein (ThiB).

The protein localises to the cell inner membrane. The catalysed reaction is thiamine(out) + ATP + H2O = thiamine(in) + ADP + phosphate + H(+). Functionally, part of the ABC transporter complex ThiBPQ involved in thiamine import. Responsible for energy coupling to the transport system. This is Thiamine import ATP-binding protein ThiQ from Haemophilus influenzae (strain 86-028NP).